The following is an 840-amino-acid chain: E3 ubiquitin-protein ligase SH3RF1 (840 aa).

The RING-type zinc finger occupies 12-53; sequence CPVCLERLDASAKVLPCQHTFCKRCLLGIVGSRNELRCPECR. The disordered stretch occupies residues 105 to 129; it reads VTCSPKDGPSSQGGPQPRAQAWSPP. SH3 domains follow at residues 134–193 and 196–259; these read PQLP…IIKP and QPPP…FNSA. Disordered regions lie at residues 267 to 324, 394 to 442, 516 to 545, 578 to 633, 652 to 723, and 744 to 773; these read DQPP…RHSM, TLNP…PRPS, GPAS…VAGG, QARS…AASG, AASL…LGAE, and MAPG…SLGP. The span at 273-282 shows a compositional bias: low complexity; it reads GVAAGEGALA. A compositionally biased stretch (polar residues) spans 283–292; the sequence is TTPSSTTTKQ. The interaction with RAC1 stretch occupies residues 292–362; that stretch reads QPDGKKNTKK…APSQVHISTT (71 aa). At serine 304 the chain carries Phosphoserine. 2 stretches are compositionally biased toward low complexity: residues 307–320 and 405–424; these read SLSM…AAQQ and QAAT…GPRP. An interaction with AKT2 region spans residues 434-537; sequence HPRPQPRPSV…PSTGGPAQKP (104 aa). An SH3 3 domain is found at 439-500; it reads PRPSVYVAIY…PGNYVAPVTR (62 aa). Residues 616 to 625 show a composition bias toward pro residues; that stretch reads SPQPPAPLGP. Positions 681 to 692 are enriched in basic and acidic residues; the sequence is RPDKDGKKEKKG. Serine 709 is modified (phosphoserine). The SH3 4 domain maps to 781 to 840; the sequence is AVCERHRVVVSYPPQSEAELELKEGDIVFVHKKREDGWFKGTLQRNGKTGLFPGSFVENI.

Belongs to the SH3RF family. Interacts with RAC1; in a GTP-dependent manner. Interacts with MAP3K10/MLK2 and MAP3K11/MLK3. Interacts with MAPK8IP; this interaction leads to the PJAC complex (POSH-JIP or SH3RF1/MAPK8IP apoptotic complex) with a 1:1 ratio. Interacts with SIAH1. Interacts with HERP1. Probably part of a signaling complex that may contain SH3RF1, MAPK8IP, DLK1, MAP2K4/MKK4, MAP2K7/MKK7, MAPK8/JNK1, MAPK9/JNK2, AKT1 and AKT2. Found in a complex with RAC2, MAP3K7/TAK1, MAP2K7/MKK7, MAPK8IP1/JIP1, MAPK8/JNK1 and MAPK9/JNK2. Found in a complex with RAC1, MAP3K11/MLK3, MAP2K7/MKK7, MAPK8IP1/JIP1 and MAPK8/JNK1. Interacts with SH3RF2. Post-translationally, phosphorylated at Ser-304 by AKT1 and AKT2. When phosphorylated, it has reduced ability to bind Rac. In terms of processing, autoubiquitinated. Ubiquitinated by SH3RF2, leading to proteasome-mediated degradation.

Its subcellular location is the cytoplasm. The protein resides in the perinuclear region. It localises to the cell projection. The protein localises to the lamellipodium. It is found in the golgi apparatus. Its subcellular location is the trans-Golgi network. It carries out the reaction S-ubiquitinyl-[E2 ubiquitin-conjugating enzyme]-L-cysteine + [acceptor protein]-L-lysine = [E2 ubiquitin-conjugating enzyme]-L-cysteine + N(6)-ubiquitinyl-[acceptor protein]-L-lysine.. It participates in protein modification; protein ubiquitination. Functionally, has E3 ubiquitin-protein ligase activity. In the absence of an external substrate, it can catalyze self-ubiquitination. Stimulates ubiquitination of potassium channel KCNJ1, enhancing it's dynamin-dependent and clathrin-independent endocytosis. Acts as a scaffold protein that coordinates with MAPK8IP1/JIP1 in organizing different components of the JNK pathway, including RAC1 or RAC2, MAP3K11/MLK3 or MAP3K7/TAK1, MAP2K7/MKK7, MAPK8/JNK1 and/or MAPK9/JNK2 into a functional multiprotein complex to ensure the effective activation of the JNK signaling pathway. Regulates the differentiation of CD4(+) and CD8(+) T-cells and promotes T-helper 1 (Th1) cell differentiation. Regulates the activation of MAPK8/JNK1 and MAPK9/JNK2 in CD4(+) T-cells and the activation of MAPK8/JNK1 in CD8(+) T-cells. Plays a crucial role in the migration of neocortical neurons in the developing brain. Controls proper cortical neuronal migration and the formation of proximal cytoplasmic dilation in the leading process (PCDLP) in migratory neocortical neurons by regulating the proper localization of activated RAC1 and F-actin assembly. This is E3 ubiquitin-protein ligase SH3RF1 (SH3RF1) from Bos taurus (Bovine).